A 97-amino-acid chain; its full sequence is Small ribosomal subunit protein bS6 (97 aa).

This sequence belongs to the bacterial ribosomal protein bS6 family.

Binds together with bS18 to 16S ribosomal RNA. This is Small ribosomal subunit protein bS6 from Bifidobacterium longum (strain NCC 2705).